A 635-amino-acid polypeptide reads, in one-letter code: Early transcription factor 70 kDa subunit (635 aa).

The Helicase ATP-binding domain maps to 32 to 185 (RSIIDENKSV…SNIISLMSDE (154 aa)). ATP is bound at residue 45 to 52 (HIMGSGKT). Positions 135–138 (DEAH) match the DEXH box motif. Residues 326–505 (KFKYFITKIE…TLPFDIKKLL (180 aa)) enclose the Helicase C-terminal domain.

The protein belongs to the helicase family. VETF subfamily. As to quaternary structure, heterodimer of a 70 kDa and a 82 kDa subunit. Part of the early transcription complex composed of ETF, RAP94, and the DNA-directed RNA polymerase.

It is found in the virion. Acts with RNA polymerase to initiate transcription from early gene promoters. Is recruited by the RPO-associated protein of 94 kDa (RAP94) to form the early transcription complex, which also contains the core RNA polymerase. ETF heterodimer binds to early gene promoters. In Oryctolagus cuniculus (Rabbit), this protein is Early transcription factor 70 kDa subunit (VETFS).